The primary structure comprises 285 residues: RNA polymerase sigma factor RpoH (285 aa).

The interval 53 to 122 (LILSHLRFVV…IHEYVLRNWR (70 aa)) is sigma-70 factor domain-2. The Interaction with polymerase core subunit RpoC signature appears at 77-80 (DLVQ). Residues 229–280 (ALASLDERSQHIVRSRWLDDDKATLQDLAEMYGVSAERIRQLEKNAMKKLKM) form a sigma-70 factor domain-4 region. The H-T-H motif DNA-binding region spans 253–272 (LQDLAEMYGVSAERIRQLEK).

The protein belongs to the sigma-70 factor family. RpoH subfamily. Interacts with the RNA polymerase core enzyme.

Its subcellular location is the cytoplasm. In terms of biological role, sigma factors are initiation factors that promote the attachment of RNA polymerase to specific initiation sites and are then released. This sigma factor is involved in regulation of expression of heat shock genes. This Vibrio vulnificus (strain CMCP6) protein is RNA polymerase sigma factor RpoH.